Reading from the N-terminus, the 142-residue chain is Prefoldin subunit alpha (142 aa).

It belongs to the prefoldin subunit alpha family. As to quaternary structure, heterohexamer of two alpha and four beta subunits.

It is found in the cytoplasm. Functionally, molecular chaperone capable of stabilizing a range of proteins. Seems to fulfill an ATP-independent, HSP70-like function in archaeal de novo protein folding. The sequence is that of Prefoldin subunit alpha from Methanosarcina mazei (strain ATCC BAA-159 / DSM 3647 / Goe1 / Go1 / JCM 11833 / OCM 88) (Methanosarcina frisia).